Consider the following 315-residue polypeptide: Putative carboxypeptidase RC0549 (315 aa).

The active-site Nucleophile is the S125. Active-site charge relay system residues include E225 and H288.

The protein belongs to the peptidase S66 family.

The chain is Putative carboxypeptidase RC0549 from Rickettsia conorii (strain ATCC VR-613 / Malish 7).